We begin with the raw amino-acid sequence, 195 residues long: MRVAEVVRNTSETQIRVKLDLDGTGRQKLATGVPFLDHMLDQIARHGLIDLEVEAHGDTHIDDHHTVEDVGITLGQAVAKAIGDKKGIRRYGHSYVPLDEALSRVVIDFSGRPGLEFHVPFTRARIGTFDVDLSIEFFRGFVNHAGVTLHIDNLRGINAHHQLETVFKAFGRALRAAVELDERAAGQIPSTKGSL.

This sequence belongs to the imidazoleglycerol-phosphate dehydratase family.

It localises to the cytoplasm. The catalysed reaction is D-erythro-1-(imidazol-4-yl)glycerol 3-phosphate = 3-(imidazol-4-yl)-2-oxopropyl phosphate + H2O. Its pathway is amino-acid biosynthesis; L-histidine biosynthesis; L-histidine from 5-phospho-alpha-D-ribose 1-diphosphate: step 6/9. The polypeptide is Imidazoleglycerol-phosphate dehydratase (Burkholderia ambifaria (strain MC40-6)).